The following is a 244-amino-acid chain: 3-deoxy-manno-octulosonate cytidylyltransferase (244 aa).

It belongs to the KdsB family.

It localises to the cytoplasm. It carries out the reaction 3-deoxy-alpha-D-manno-oct-2-ulosonate + CTP = CMP-3-deoxy-beta-D-manno-octulosonate + diphosphate. It participates in nucleotide-sugar biosynthesis; CMP-3-deoxy-D-manno-octulosonate biosynthesis; CMP-3-deoxy-D-manno-octulosonate from 3-deoxy-D-manno-octulosonate and CTP: step 1/1. It functions in the pathway bacterial outer membrane biogenesis; lipopolysaccharide biosynthesis. Functionally, activates KDO (a required 8-carbon sugar) for incorporation into bacterial lipopolysaccharide in Gram-negative bacteria. In Flavobacterium johnsoniae (strain ATCC 17061 / DSM 2064 / JCM 8514 / BCRC 14874 / CCUG 350202 / NBRC 14942 / NCIMB 11054 / UW101) (Cytophaga johnsonae), this protein is 3-deoxy-manno-octulosonate cytidylyltransferase.